A 181-amino-acid polypeptide reads, in one-letter code: UPF0200 protein Ta0179 (181 aa).

An ATP-binding site is contributed by 6 to 13 (GMPGAGKD).

The protein belongs to the UPF0200 family.

This Thermoplasma acidophilum (strain ATCC 25905 / DSM 1728 / JCM 9062 / NBRC 15155 / AMRC-C165) protein is UPF0200 protein Ta0179.